Consider the following 387-residue polypeptide: Protein FAM153B (387 aa).

Disordered stretches follow at residues serine 233–leucine 256 and threonine 327–arginine 374. Over residues serine 336–glutamate 345 the composition is skewed to low complexity. Positions alanine 347 to threonine 359 are enriched in basic and acidic residues. The span at arginine 360 to arginine 374 shows a compositional bias: basic residues.

It belongs to the FAM153 family.

This Homo sapiens (Human) protein is Protein FAM153B (FAM153B).